Consider the following 415-residue polypeptide: Diaminopimelate decarboxylase (415 aa).

Lysine 60 is modified (N6-(pyridoxal phosphate)lysine). Pyridoxal 5'-phosphate is bound by residues glycine 239 and 273–276 (EPGR). Positions 276, 312, and 316 each coordinate substrate. The active-site Proton donor is the cysteine 342. The substrate site is built by glutamate 343 and tyrosine 370. Tyrosine 370 is a pyridoxal 5'-phosphate binding site.

It belongs to the Orn/Lys/Arg decarboxylase class-II family. LysA subfamily. As to quaternary structure, homodimer. Pyridoxal 5'-phosphate serves as cofactor.

It carries out the reaction meso-2,6-diaminopimelate + H(+) = L-lysine + CO2. It participates in amino-acid biosynthesis; L-lysine biosynthesis via DAP pathway; L-lysine from DL-2,6-diaminopimelate: step 1/1. Functionally, specifically catalyzes the decarboxylation of meso-diaminopimelate (meso-DAP) to L-lysine. This is Diaminopimelate decarboxylase from Pseudomonas aeruginosa (strain ATCC 15692 / DSM 22644 / CIP 104116 / JCM 14847 / LMG 12228 / 1C / PRS 101 / PAO1).